A 2948-amino-acid polypeptide reads, in one-letter code: Transforming acidic coiled-coil-containing protein 2 (2948 aa).

Polar residues predominate over residues 1 to 30; it reads MGNENSTSDNQRTLSAQTPRSAQPPGNSQN. 15 disordered regions span residues 1-304, 314-333, 392-453, 465-785, 825-964, 985-1050, 1062-1154, 1243-1274, 1296-1400, 1427-1463, 1493-1661, 1675-1705, 1741-1878, 1907-2035, and 2052-2460; these read MGNE…TDDL, RSNSGAAPEAEVNAASQESC, AAGG…MPVS, LVGL…PQGE, SSEK…VSPP, CTGQ…QPDS, ALAP…GEAT, AAQRGAEDSGVKAVSSADPRAPGESPCPVGEP, QPGA…EQIA, PGEKAGAGRSAVGKDLTRPLGPEKLLDGPPGVDVTLL, ASDK…GERR, LGNQSTPAPPTGEVADTPLEPGKVAGAAGEA, VLPG…ESPT, HAGL…SSGT, and LEPR…ETPP. The span at 174–184 shows a compositional bias: basic and acidic residues; the sequence is GRERQPKEEGQ. A phosphoserine mark is found at serine 197, serine 201, and serine 269. Position 325 is a phosphothreonine (valine 325). Serine 493 is subject to Phosphoserine. Residues 496–507 are compositionally biased toward basic and acidic residues; sequence ERGEHLNTEQSH. Residues serine 561, serine 571, and serine 575 each carry the phosphoserine modification. The span at 604-629 shows a compositional bias: basic and acidic residues; the sequence is SKRDPEVGKDELSKPSSDAESRDHPS. Serine 758 bears the Phosphoserine mark. A compositionally biased stretch (low complexity) spans 911-926; it reads SDTPTSSPTDMVWESS. Serine 962 carries the post-translational modification Phosphoserine. Over residues 985–996 the composition is skewed to polar residues; that stretch reads CTGQGPNKSQQA. The residue at position 1025 (serine 1025) is a Phosphoserine. Phosphoserine occurs at positions 1267 and 1313. A compositionally biased stretch (low complexity) spans 1348–1357; the sequence is ATAPGAGAKA. Over residues 1383–1400 the composition is skewed to polar residues; that stretch reads DPKQGTSGGVDTSSEQIA. Serine 1562 is subject to Phosphoserine. Basic and acidic residues-rich tracts occupy residues 1801-1823 and 1834-1854; these read DETHDPKLQHLAPEELHTDRESP and PKKDAPRVMDKVTSDETRGAE. Residues 1862 to 1873 are compositionally biased toward low complexity; sequence ADDIIQPAAPAD. Basic and acidic residues predominate over residues 1939 to 1948; the sequence is PAKDLSRSSD. Residues 1963 to 1976 show a composition bias toward pro residues; that stretch reads KAPPAPPPPPPEVI. The residue at position 2072 (serine 2072) is a Phosphoserine. Polar residues predominate over residues 2074–2102; that stretch reads DSVPISKSTLSRSLSLQASDFDGASSSGN. The span at 2114–2124 shows a compositional bias: low complexity; it reads STGSSSASSTL. Residues 2125–2141 are compositionally biased toward basic residues; sequence KRTKKPRPPSLKKKQTT. Phosphoserine is present on residues serine 2161 and serine 2226. Threonine 2246 bears the Phosphothreonine mark. Serine 2256 carries the phosphoserine modification. Over residues 2265–2275 the composition is skewed to basic and acidic residues; sequence LEFDYSEDKSS. Residues 2288-2305 are compositionally biased toward basic residues; sequence KIGKKPVAKMPLRRPKMK. The SPAZ domain occupies 2315-2403; sequence PASPPRSPAE…SPASFEIPAS (89 aa). Phosphoserine is present on residues serine 2317, serine 2321, serine 2359, serine 2389, serine 2392, serine 2394, and serine 2403. Positions 2348-2368 are enriched in polar residues; that stretch reads NPFSSTSKMQESPKLPQQSYN. Residues 2382–2395 show a composition bias toward low complexity; the sequence is KTSSKTPSSPSKSP. Phosphothreonine is present on residues threonine 2430, threonine 2451, threonine 2455, and threonine 2458. Phosphoserine is present on residues serine 2512 and serine 2534. The residue at position 2553 (threonine 2553) is a Phosphothreonine. A disordered region spans residues 2555 to 2577; the sequence is QESPVKSSPVRMSESPTPCSGSS. Serine 2557 and serine 2569 each carry phosphoserine. Over residues 2568–2577 the composition is skewed to polar residues; sequence ESPTPCSGSS. Phosphothreonine is present on threonine 2625. Coiled-coil stretches lie at residues 2675–2703 and 2746–2947; these read AQKLQEELEFAIMRIEALKLARQIALASR and DLDS…KMGK.

This sequence belongs to the TACC family. In terms of assembly, interacts with CCDC100/CEP120. Interacts with microtubules. Interacts with YEATS4, GCN5L2 and PCAF. In terms of processing, phosphorylated by TTK; which is required for localization in centrosome. In terms of tissue distribution, strongly expressed in heart, skeletal muscle, brain, prostate, thyroid and trachea.

It is found in the cytoplasm. It localises to the nucleus. Its subcellular location is the cytoskeleton. The protein localises to the microtubule organizing center. The protein resides in the centrosome. In terms of biological role, plays a role in the microtubule-dependent coupling of the nucleus and the centrosome. Involved in the processes that regulate centrosome-mediated interkinetic nuclear migration (INM) of neural progenitors. May play a role in organizing centrosomal microtubules. May act as a tumor suppressor protein. May represent a tumor progression marker. In Homo sapiens (Human), this protein is Transforming acidic coiled-coil-containing protein 2 (TACC2).